We begin with the raw amino-acid sequence, 445 residues long: Ribosomal protein uS12 methylthiotransferase RimO (445 aa).

Positions I4–K119 constitute an MTTase N-terminal domain. C13, C48, C82, C156, C160, and C163 together coordinate [4Fe-4S] cluster. In terms of domain architecture, Radical SAM core spans T142 to D372. A TRAM domain is found at K375–N441.

It belongs to the methylthiotransferase family. RimO subfamily. [4Fe-4S] cluster is required as a cofactor.

Its subcellular location is the cytoplasm. The catalysed reaction is L-aspartate(89)-[ribosomal protein uS12]-hydrogen + (sulfur carrier)-SH + AH2 + 2 S-adenosyl-L-methionine = 3-methylsulfanyl-L-aspartate(89)-[ribosomal protein uS12]-hydrogen + (sulfur carrier)-H + 5'-deoxyadenosine + L-methionine + A + S-adenosyl-L-homocysteine + 2 H(+). Functionally, catalyzes the methylthiolation of an aspartic acid residue of ribosomal protein uS12. The chain is Ribosomal protein uS12 methylthiotransferase RimO from Clostridium botulinum (strain ATCC 19397 / Type A).